Consider the following 175-residue polypeptide: Transcription factor HES-3 (175 aa).

One can recognise a bHLH domain in the interval 1–49 (MEKKRRARINLSLEQLRSLLERHYSHQIRKRKLEKADILELSVKYVRSL). The Orange domain maps to 65–98 (YPSGFRGGLPGSSQRLRPGEDDSGLRCPLLLQRR). Low complexity predominate over residues 124–145 (PGPPAGGSQSPQSPFPPLGGLL). The tract at residues 124 to 175 (PGPPAGGSQSPQSPFPPLGGLLESSTGILAPPPASNCQAENPRPGFRVWRPW) is disordered. Positions 172-175 (WRPW) match the WRPW motif motif.

Transcription repression requires formation of a complex with a corepressor protein of the Groucho/TLE family. In terms of tissue distribution, expressed exclusively in Purkinje cells.

The protein resides in the nucleus. Functionally, transcriptional repressor of genes that require a bHLH protein for their transcription. In Rattus norvegicus (Rat), this protein is Transcription factor HES-3 (Hes3).